Here is a 199-residue protein sequence, read N- to C-terminus: uncharacterized protein (199 aa).

6 consecutive transmembrane segments (helical) span residues 1–21 (MEQF…TFIF), 28–48 (IAVS…IALY), 51–71 (LNAA…YLGM), 83–103 (LVAA…WFII), 127–147 (QLVL…FVIQ), and 154–174 (AVGG…LFGI).

It is found in the cell membrane. This is an uncharacterized protein from Bacillus subtilis (strain 168).